A 121-amino-acid polypeptide reads, in one-letter code: Protein yippee-like At3g55890 (121 aa).

The Yippee domain maps to 12-109; sequence NIYICKLCKT…LELYKISGPH (98 aa). Residues Cys16, Cys19, Cys72, and Cys75 each coordinate Zn(2+).

Belongs to the yippee family.

The sequence is that of Protein yippee-like At3g55890 from Arabidopsis thaliana (Mouse-ear cress).